Reading from the N-terminus, the 149-residue chain is D-aminoacyl-tRNA deacylase (149 aa).

The Gly-cisPro motif, important for rejection of L-amino acids signature appears at 137-138 (GP).

The protein belongs to the DTD family. As to quaternary structure, homodimer.

The protein resides in the cytoplasm. It carries out the reaction glycyl-tRNA(Ala) + H2O = tRNA(Ala) + glycine + H(+). The enzyme catalyses a D-aminoacyl-tRNA + H2O = a tRNA + a D-alpha-amino acid + H(+). Its function is as follows. An aminoacyl-tRNA editing enzyme that deacylates mischarged D-aminoacyl-tRNAs. Also deacylates mischarged glycyl-tRNA(Ala), protecting cells against glycine mischarging by AlaRS. Acts via tRNA-based rather than protein-based catalysis; rejects L-amino acids rather than detecting D-amino acids in the active site. By recycling D-aminoacyl-tRNA to D-amino acids and free tRNA molecules, this enzyme counteracts the toxicity associated with the formation of D-aminoacyl-tRNA entities in vivo and helps enforce protein L-homochirality. This chain is D-aminoacyl-tRNA deacylase, found in Clostridium perfringens (strain ATCC 13124 / DSM 756 / JCM 1290 / NCIMB 6125 / NCTC 8237 / Type A).